Consider the following 482-residue polypeptide: MLRTRGPGSILDPPLGGRREAIERELKKLRAEREELDGRIRLLESQLEAGPAGFNGAAAGKGVGDDACGGSGACQSRVGNGFAPDGSLPADMIYRYSRHLLLPDFGVEGQRKLSQSSILVVGAGGLGSPLALYLAACGVGCLGIVDGDDVELNNLHRQIIHKEAYVGQSKVKSAADACREINSAIKVVEHHHTLKPCNALEIARKYDIVVDATDNLPTRYMISDCCVLLNKPLVSGAALGLEGQLTVYHHNGSPCYRCLFPTPPPVAACQRCSDSGVLGVVPGVIGCLQALEAIKVATGVGEPLCGRMLLFDALSARIRVVKLRGSSPDCTHCGENSVFTEEDFQKFDYESFTQSPMSDKAAASVNVLPESARITCREYKKLADDGEPHLLLDVRPAHHFQIASISPSHNIPLSMLEEKLPALEASLKEAGEGSALVVLCRRGNDSQRAVQLLREKGFANAKDIIGGLQAWGQDVDPDFPVY.

ATP is bound by residues Gly125, Asp146, 153 to 157, Lys170, and 214 to 215; these read NNLHR and DN. Residues Cys255 and Cys258 each coordinate Zn(2+). Cys272 functions as the Glycyl thioester intermediate; for adenylyltransferase activity in the catalytic mechanism. Zn(2+)-binding residues include Cys330 and Cys333. The Rhodanese domain maps to 385–480; that stretch reads DGEPHLLLDV…WGQDVDPDFP (96 aa). Residue Cys440 is the Cysteine persulfide intermediate; for sulfurtransferase activity of the active site.

In the N-terminal section; belongs to the HesA/MoeB/ThiF family. UBA4 subfamily. Zn(2+) serves as cofactor.

The protein resides in the cytoplasm. The catalysed reaction is [molybdopterin-synthase sulfur-carrier protein]-C-terminal Gly-Gly + ATP + H(+) = [molybdopterin-synthase sulfur-carrier protein]-C-terminal Gly-Gly-AMP + diphosphate. The enzyme catalyses [molybdopterin-synthase sulfur-carrier protein]-C-terminal Gly-Gly-AMP + S-sulfanyl-L-cysteinyl-[cysteine desulfurase] + AH2 = [molybdopterin-synthase sulfur-carrier protein]-C-terminal-Gly-aminoethanethioate + L-cysteinyl-[cysteine desulfurase] + A + AMP + 2 H(+). Its pathway is tRNA modification; 5-methoxycarbonylmethyl-2-thiouridine-tRNA biosynthesis. The protein operates within cofactor biosynthesis; molybdopterin biosynthesis. Plays a central role in 2-thiolation of mcm(5)S(2)U at tRNA wobble positions of cytosolic tRNA(Lys), tRNA(Glu) and tRNA(Gln). Also essential during biosynthesis of the molybdenum cofactor. Acts by mediating the C-terminal thiocarboxylation of sulfur carriers URM1 and MOCS2A. Its N-terminus first activates URM1 and MOCS2A as acyl-adenylates (-COAMP), then the persulfide sulfur on the catalytic cysteine is transferred to URM1 and MOCS2A to form thiocarboxylation (-COSH) of their C-terminus. The reaction probably involves hydrogen sulfide that is generated from the persulfide intermediate and that acts as a nucleophile towards URM1 and MOCS2A. Subsequently, a transient disulfide bond is formed. Does not use thiosulfate as sulfur donor; NFS1 probably acting as a sulfur donor for thiocarboxylation reactions. This Zea mays (Maize) protein is Adenylyltransferase and sulfurtransferase MOCS3-2.